Reading from the N-terminus, the 37-residue chain is GYGCPFNQYQCHSHCKGIRGYKGGYCKGAFKQTCKCY.

3 disulfides stabilise this stretch: Cys-4–Cys-26, Cys-11–Cys-34, and Cys-15–Cys-36.

It belongs to the invertebrate defensin family.

The protein resides in the secreted. Its function is as follows. Antibacterial peptide mostly active against Gram-positive bacteria (MIC=0.24 ug/ml on Bacillus subtilis, and MIC=0.94 ug/ml on Micrococcus luteus, MIC&gt;120 ug/ml on both Escherichia coli and Pseudomonas aeruginosa). The protein is Tick defensin 2 of Ornithodoros savignyi (African eyed tampan).